Consider the following 237-residue polypeptide: 2,3-bisphosphoglycerate-dependent phosphoglycerate mutase (237 aa).

Substrate is bound by residues 10 to 17 (RHGESKWN), 23 to 24 (TG), R62, 89 to 92 (ERHY), K100, 116 to 117 (RR), and 185 to 186 (GN). The active-site Tele-phosphohistidine intermediate is the H11. E89 acts as the Proton donor/acceptor in catalysis.

Belongs to the phosphoglycerate mutase family. BPG-dependent PGAM subfamily. In terms of assembly, homodimer.

It carries out the reaction (2R)-2-phosphoglycerate = (2R)-3-phosphoglycerate. It functions in the pathway carbohydrate degradation; glycolysis; pyruvate from D-glyceraldehyde 3-phosphate: step 3/5. Catalyzes the interconversion of 2-phosphoglycerate and 3-phosphoglycerate. The protein is 2,3-bisphosphoglycerate-dependent phosphoglycerate mutase of Baumannia cicadellinicola subsp. Homalodisca coagulata.